Here is a 285-residue protein sequence, read N- to C-terminus: Urease accessory protein UreD (285 aa).

The protein belongs to the UreD family. As to quaternary structure, ureD, UreF and UreG form a complex that acts as a GTP-hydrolysis-dependent molecular chaperone, activating the urease apoprotein by helping to assemble the nickel containing metallocenter of UreC. The UreE protein probably delivers the nickel.

The protein resides in the cytoplasm. Its function is as follows. Required for maturation of urease via the functional incorporation of the urease nickel metallocenter. The polypeptide is Urease accessory protein UreD (Cenarchaeum symbiosum (strain A)).